Consider the following 339-residue polypeptide: MFYKIAQKVMFQMDPERAHHLAIGSLKMTANSPLTCLYGQTIAPAPVSVMGLTFPNPVGLAAGMDKDGESIDAFHAMGFGHVEVGTVTPRPQPGNDLPRLFRLKPAKGIINRMGFNNKGVDNLVKNLIAKKTDIMVGVNIGKNKDTPVEQGKDDYLICMDKVYLHAAYIAVNISSPNTPGLRSLQYGDLLDELLSAIKTKQLELAEKHKKYVPIALKIAPDLTIEEIENIAQALIKNKFDGAIATNTTLTRDGVSGLANANESGGLSGKPLTELSIKVIKQLAICLKGQIPIIGVGGINSADDALAKFDAGATMVQIYSGFIYQGPKLIKEIVNAYRLK.

FMN contacts are provided by residues 62–66 (AGMDK) and Thr-86. Substrate is bound at residue Lys-66. 111–115 (NRMGF) provides a ligand contact to substrate. Positions 139 and 172 each coordinate FMN. Asn-172 is a binding site for substrate. Ser-175 functions as the Nucleophile in the catalytic mechanism. Asn-177 is a binding site for substrate. 2 residues coordinate FMN: Lys-217 and Thr-245. 246–247 (NT) serves as a coordination point for substrate. FMN-binding positions include Gly-268, Gly-297, and 318–319 (YS).

Belongs to the dihydroorotate dehydrogenase family. Type 2 subfamily. Monomer. FMN serves as cofactor.

The protein resides in the cell membrane. The catalysed reaction is (S)-dihydroorotate + a quinone = orotate + a quinol. Its pathway is pyrimidine metabolism; UMP biosynthesis via de novo pathway; orotate from (S)-dihydroorotate (quinone route): step 1/1. Catalyzes the conversion of dihydroorotate to orotate with quinone as electron acceptor. This chain is Dihydroorotate dehydrogenase (quinone), found in Shewanella baltica (strain OS155 / ATCC BAA-1091).